A 327-amino-acid polypeptide reads, in one-letter code: E3 ubiquitin ligase Rnf121 (327 aa).

A2 bears the N-acetylalanine mark. Transmembrane regions (helical) follow at residues 50 to 70 (MHAEMVLILIATLVVAQLLLV), 79 to 99 (SYNMVTLFQMWVVPLYFTVKL), 100 to 120 (HWWRFLVIWIFFSAVTAFVTF), 148 to 168 (ATGIVGYMAVMFTLFGLNLLF), and 172 to 192 (PEDAMDFGISLLFYGLYYGVL). An RING-type; atypical zinc finger spans residues 226-276 (CAVCGQQIFVDVNEEGIIENTYRLSCNHVFHEFCIRGWCIVGKKQTCPYCK). A helical transmembrane segment spans residues 306-326 (LVAWQPVIIGLVQGISYILGL).

This sequence belongs to the RNF121 family.

The protein localises to the endoplasmic reticulum membrane. It carries out the reaction S-ubiquitinyl-[E2 ubiquitin-conjugating enzyme]-L-cysteine + [acceptor protein]-L-lysine = [E2 ubiquitin-conjugating enzyme]-L-cysteine + N(6)-ubiquitinyl-[acceptor protein]-L-lysine.. It functions in the pathway protein modification; protein ubiquitination. In terms of biological role, E3 ubiquitin ligase which accepts ubiquitin and transfers it to substrates thereby promoting their degradation by the endoplasmic reticulum-associated degradation (ERAD) pathway which is a pathway involved in ubiquitin-dependent degradation of misfolded endoplasmic reticulum proteins. May regulate the unfolded protein response to reduce endoplasmic reticulum stress. The protein is E3 ubiquitin ligase Rnf121 (Rnf121) of Mus musculus (Mouse).